Reading from the N-terminus, the 154-residue chain is SsrA-binding protein (154 aa).

This sequence belongs to the SmpB family.

The protein resides in the cytoplasm. Required for rescue of stalled ribosomes mediated by trans-translation. Binds to transfer-messenger RNA (tmRNA), required for stable association of tmRNA with ribosomes. tmRNA and SmpB together mimic tRNA shape, replacing the anticodon stem-loop with SmpB. tmRNA is encoded by the ssrA gene; the 2 termini fold to resemble tRNA(Ala) and it encodes a 'tag peptide', a short internal open reading frame. During trans-translation Ala-aminoacylated tmRNA acts like a tRNA, entering the A-site of stalled ribosomes, displacing the stalled mRNA. The ribosome then switches to translate the ORF on the tmRNA; the nascent peptide is terminated with the 'tag peptide' encoded by the tmRNA and targeted for degradation. The ribosome is freed to recommence translation, which seems to be the essential function of trans-translation. This chain is SsrA-binding protein, found in Lachnoclostridium phytofermentans (strain ATCC 700394 / DSM 18823 / ISDg) (Clostridium phytofermentans).